Consider the following 203-residue polypeptide: Thymidylate kinase (203 aa).

7-14 contacts ATP; sequence GGEGAGKT.

It belongs to the thymidylate kinase family.

The enzyme catalyses dTMP + ATP = dTDP + ADP. Functionally, phosphorylation of dTMP to form dTDP in both de novo and salvage pathways of dTTP synthesis. In Chlamydia trachomatis serovar L2 (strain ATCC VR-902B / DSM 19102 / 434/Bu), this protein is Thymidylate kinase.